Consider the following 367-residue polypeptide: S-adenosylmethionine:tRNA ribosyltransferase-isomerase (367 aa).

The disordered stretch occupies residues 150–182 (RHGEEEESSDEAISSQNPEIATESKRTPSNDDK). Basic and acidic residues predominate over residues 171–182 (TESKRTPSNDDK).

The protein belongs to the QueA family. In terms of assembly, monomer.

The protein localises to the cytoplasm. The catalysed reaction is 7-aminomethyl-7-carbaguanosine(34) in tRNA + S-adenosyl-L-methionine = epoxyqueuosine(34) in tRNA + adenine + L-methionine + 2 H(+). It participates in tRNA modification; tRNA-queuosine biosynthesis. Transfers and isomerizes the ribose moiety from AdoMet to the 7-aminomethyl group of 7-deazaguanine (preQ1-tRNA) to give epoxyqueuosine (oQ-tRNA). The protein is S-adenosylmethionine:tRNA ribosyltransferase-isomerase of Rickettsia felis (strain ATCC VR-1525 / URRWXCal2) (Rickettsia azadi).